The primary structure comprises 211 residues: Regulator of G-protein signaling 2 (211 aa).

Residues 32 to 66 (KMKRTLLKDWKTRLSYFLQNSSAPGKPKTGKKSKQ) form a necessary for membrane association region. The segment at 79-116 (LWAEAFDELLASKYGLAAFRAFLKSEFCEENIEFWLAC) is necessary to inhibit protein synthesis. An RGS domain is found at 83–199 (AFDELLASKY…LESEFYQDLC (117 aa)).

Interacts with GNAQ. Does not interact with GNAI1 and GNAI3. Interacts with EIF2B5. Interacts with PRKG1 (isoform alpha). Phosphorylated by protein kinase C. Phosphorylation by PRKG1 leads to activation of RGS2 activity. As to expression, expressed in a wide variety of tissues.

Its subcellular location is the cell membrane. The protein resides in the cytoplasm. The protein localises to the nucleus. It localises to the nucleolus. Functionally, regulates G protein-coupled receptor signaling cascades. Inhibits signal transduction by increasing the GTPase activity of G protein alpha subunits, thereby driving them into their inactive GDP-bound form. It is involved in the negative regulation of the angiotensin-activated signaling pathway. Plays a role in the regulation of blood pressure in response to signaling via G protein-coupled receptors and GNAQ. Plays a role in regulating the constriction and relaxation of vascular smooth muscle. Binds EIF2B5 and blocks its activity, thereby inhibiting the translation of mRNA into protein. In Mus musculus (Mouse), this protein is Regulator of G-protein signaling 2 (Rgs2).